The following is a 337-amino-acid chain: Ketol-acid reductoisomerase (NADP(+)) (337 aa).

Positions 3-183 (LEMFYDDDAD…GGTRAGVIKT (181 aa)) constitute a KARI N-terminal Rossmann domain. Residues 26 to 29 (YGSQ), K49, S52, S54, and 84 to 87 (DTAQ) contribute to the NADP(+) site. The active site involves H109. G135 serves as a coordination point for NADP(+). One can recognise a KARI C-terminal knotted domain in the interval 184 to 329 (TFKDETETDL…KKLRDLMSWV (146 aa)). Mg(2+) is bound by residues D192, E196, E228, and E232. S253 provides a ligand contact to substrate.

Belongs to the ketol-acid reductoisomerase family. It depends on Mg(2+) as a cofactor.

The enzyme catalyses (2R)-2,3-dihydroxy-3-methylbutanoate + NADP(+) = (2S)-2-acetolactate + NADPH + H(+). It carries out the reaction (2R,3R)-2,3-dihydroxy-3-methylpentanoate + NADP(+) = (S)-2-ethyl-2-hydroxy-3-oxobutanoate + NADPH + H(+). The protein operates within amino-acid biosynthesis; L-isoleucine biosynthesis; L-isoleucine from 2-oxobutanoate: step 2/4. It participates in amino-acid biosynthesis; L-valine biosynthesis; L-valine from pyruvate: step 2/4. In terms of biological role, involved in the biosynthesis of branched-chain amino acids (BCAA). Catalyzes an alkyl-migration followed by a ketol-acid reduction of (S)-2-acetolactate (S2AL) to yield (R)-2,3-dihydroxy-isovalerate. In the isomerase reaction, S2AL is rearranged via a Mg-dependent methyl migration to produce 3-hydroxy-3-methyl-2-ketobutyrate (HMKB). In the reductase reaction, this 2-ketoacid undergoes a metal-dependent reduction by NADPH to yield (R)-2,3-dihydroxy-isovalerate. The protein is Ketol-acid reductoisomerase (NADP(+)) of Mycobacterium bovis (strain BCG / Pasteur 1173P2).